A 349-amino-acid chain; its full sequence is Lipoyl synthase (349 aa).

Residues cysteine 55, cysteine 60, cysteine 66, cysteine 81, cysteine 85, cysteine 88, and serine 292 each contribute to the [4Fe-4S] cluster site. The Radical SAM core domain occupies 67–281; it reads WEDREATFLI…SDAAYELGIK (215 aa). The disordered stretch occupies residues 321-349; it reads LDSTTSQEASTLLERYGASEDTPVTASRR.

It belongs to the radical SAM superfamily. Lipoyl synthase family. Requires [4Fe-4S] cluster as cofactor.

It localises to the cytoplasm. It carries out the reaction [[Fe-S] cluster scaffold protein carrying a second [4Fe-4S](2+) cluster] + N(6)-octanoyl-L-lysyl-[protein] + 2 oxidized [2Fe-2S]-[ferredoxin] + 2 S-adenosyl-L-methionine + 4 H(+) = [[Fe-S] cluster scaffold protein] + N(6)-[(R)-dihydrolipoyl]-L-lysyl-[protein] + 4 Fe(3+) + 2 hydrogen sulfide + 2 5'-deoxyadenosine + 2 L-methionine + 2 reduced [2Fe-2S]-[ferredoxin]. The protein operates within protein modification; protein lipoylation via endogenous pathway; protein N(6)-(lipoyl)lysine from octanoyl-[acyl-carrier-protein]: step 2/2. Functionally, catalyzes the radical-mediated insertion of two sulfur atoms into the C-6 and C-8 positions of the octanoyl moiety bound to the lipoyl domains of lipoate-dependent enzymes, thereby converting the octanoylated domains into lipoylated derivatives. The sequence is that of Lipoyl synthase from Corynebacterium jeikeium (strain K411).